We begin with the raw amino-acid sequence, 306 residues long: Acetyl-coenzyme A carboxylase carboxyl transferase subunit beta (306 aa).

The region spanning 27-296 is the CoA carboxyltransferase N-terminal domain; sequence LWHKCPSCDA…PRFVAPVIEP (270 aa). Residues cysteine 31, cysteine 34, cysteine 50, and cysteine 53 each contribute to the Zn(2+) site. The C4-type zinc-finger motif lies at 31–53; it reads CPSCDAVLYRPELEKTLDVCPKC.

This sequence belongs to the AccD/PCCB family. Acetyl-CoA carboxylase is a heterohexamer composed of biotin carboxyl carrier protein (AccB), biotin carboxylase (AccC) and two subunits each of ACCase subunit alpha (AccA) and ACCase subunit beta (AccD). Requires Zn(2+) as cofactor.

Its subcellular location is the cytoplasm. It carries out the reaction N(6)-carboxybiotinyl-L-lysyl-[protein] + acetyl-CoA = N(6)-biotinyl-L-lysyl-[protein] + malonyl-CoA. It functions in the pathway lipid metabolism; malonyl-CoA biosynthesis; malonyl-CoA from acetyl-CoA: step 1/1. Component of the acetyl coenzyme A carboxylase (ACC) complex. Biotin carboxylase (BC) catalyzes the carboxylation of biotin on its carrier protein (BCCP) and then the CO(2) group is transferred by the transcarboxylase to acetyl-CoA to form malonyl-CoA. This is Acetyl-coenzyme A carboxylase carboxyl transferase subunit beta from Pseudomonas syringae pv. tomato (strain ATCC BAA-871 / DC3000).